The following is a 207-amino-acid chain: Thiamine-phosphate synthase (207 aa).

4-amino-2-methyl-5-(diphosphooxymethyl)pyrimidine is bound by residues 36–40 (QLRMK) and N68. The Mg(2+) site is built by D69 and D88. 4-amino-2-methyl-5-(diphosphooxymethyl)pyrimidine is bound at residue S106. 132 to 134 (TNT) is a 2-[(2R,5Z)-2-carboxy-4-methylthiazol-5(2H)-ylidene]ethyl phosphate binding site. Residue K135 participates in 4-amino-2-methyl-5-(diphosphooxymethyl)pyrimidine binding. 2-[(2R,5Z)-2-carboxy-4-methylthiazol-5(2H)-ylidene]ethyl phosphate is bound by residues G162 and 182 to 183 (VS).

It belongs to the thiamine-phosphate synthase family. Requires Mg(2+) as cofactor.

It carries out the reaction 2-[(2R,5Z)-2-carboxy-4-methylthiazol-5(2H)-ylidene]ethyl phosphate + 4-amino-2-methyl-5-(diphosphooxymethyl)pyrimidine + 2 H(+) = thiamine phosphate + CO2 + diphosphate. The catalysed reaction is 2-(2-carboxy-4-methylthiazol-5-yl)ethyl phosphate + 4-amino-2-methyl-5-(diphosphooxymethyl)pyrimidine + 2 H(+) = thiamine phosphate + CO2 + diphosphate. The enzyme catalyses 4-methyl-5-(2-phosphooxyethyl)-thiazole + 4-amino-2-methyl-5-(diphosphooxymethyl)pyrimidine + H(+) = thiamine phosphate + diphosphate. The protein operates within cofactor biosynthesis; thiamine diphosphate biosynthesis; thiamine phosphate from 4-amino-2-methyl-5-diphosphomethylpyrimidine and 4-methyl-5-(2-phosphoethyl)-thiazole: step 1/1. In terms of biological role, condenses 4-methyl-5-(beta-hydroxyethyl)thiazole monophosphate (THZ-P) and 2-methyl-4-amino-5-hydroxymethyl pyrimidine pyrophosphate (HMP-PP) to form thiamine monophosphate (TMP). This is Thiamine-phosphate synthase from Methanococcus maripaludis (strain C7 / ATCC BAA-1331).